Reading from the N-terminus, the 207-residue chain is dTTP/UTP pyrophosphatase (207 aa).

Residue D87 is the Proton acceptor of the active site.

It belongs to the Maf family. YhdE subfamily. A divalent metal cation serves as cofactor.

Its subcellular location is the cytoplasm. It catalyses the reaction dTTP + H2O = dTMP + diphosphate + H(+). The enzyme catalyses UTP + H2O = UMP + diphosphate + H(+). Nucleoside triphosphate pyrophosphatase that hydrolyzes dTTP and UTP. May have a dual role in cell division arrest and in preventing the incorporation of modified nucleotides into cellular nucleic acids. In Bordetella pertussis (strain Tohama I / ATCC BAA-589 / NCTC 13251), this protein is dTTP/UTP pyrophosphatase.